Reading from the N-terminus, the 989-residue chain is Clumping factor A (989 aa).

An N-terminal signal peptide occupies residues 1–39; it reads MNMKKKEKHAIRKKSIGVASVLVGTLIGFGLLSSKEADA. Positions 9–20 match the YSIRK-G/S signaling motif motif; sequence HAIRKKSIGVAS. Disordered stretches follow at residues 34–205 and 529–960; these read SKEA…VSQA and FNNG…SEDE. Positions 40-542 are ligand binding A region; it reads SENSVTQSDS…SGSGDGIDKP (503 aa). Positions 47–65 are enriched in low complexity; the sequence is SDSASNESKSNDSSSVSAA. A compositionally biased stretch (polar residues) spans 71 to 105; sequence TNVSDTKTSSNTNNGETSVAQNPAQQETTQSSSTN. Low complexity-rich tracts occupy residues 106 to 132 and 143 to 162; these read ATTE…ATTQ and NQTS…SVNS. A compositionally biased stretch (polar residues) spans 163-205; the sequence is PQNSTNAENVSTTQDTSTEATPSNNESAPQNTDASNKDVVSQA. Residues 547–565 show a composition bias toward acidic residues; sequence QPDEPGEIEPIPEDSDSDP. Positions 566 to 598 are enriched in low complexity; that stretch reads GSDSGSDSNSDSGSDSGSDSTSDSGSDSASDSD. Residues 599–917 are compositionally biased toward acidic residues; sequence SASDSDSASD…DNDSDSDSNS (319 aa). Positions 918 to 936 are enriched in low complexity; that stretch reads DSESGSNNNVVPPNSPKNG. The segment covering 943-952 has biased composition (basic and acidic residues); it reads NEAKDSKEPL. The short motif at 952 to 956 is the LPXTG sorting signal element; the sequence is LPDTG. Pentaglycyl murein peptidoglycan amidated threonine is present on T955. Residues 956 to 989 constitute a propeptide, removed by sortase; sequence GSEDEANTSLIWGLLASLGSLLLFRRKKENKDKK.

Belongs to the serine-aspartate repeat-containing protein (SDr) family.

Its subcellular location is the secreted. It is found in the cell wall. Functionally, cell surface-associated protein implicated in virulence. Promotes bacterial attachment exclusively to the gamma-chain of human fibrinogen. Induces formation of bacterial clumps, which diminish the ability of group IIA phospholipase A2 to cause bacterial phospholipid hydrolysis and killing. Significantly decreases macrophage phagocytosis possibly thanks to the clumps, clumped bacteria being too large to be phagocytosed. Dominant factor responsible for human platelet aggregation, which may be an important mechanism for initiating infective endocarditis. This Staphylococcus aureus (strain N315) protein is Clumping factor A (clfA).